A 282-amino-acid polypeptide reads, in one-letter code: Bifunctional protein FolD (282 aa).

NADP(+) is bound by residues Asn160–Ser162, Ser185, and Ile228.

It belongs to the tetrahydrofolate dehydrogenase/cyclohydrolase family. In terms of assembly, homodimer.

The catalysed reaction is (6R)-5,10-methylene-5,6,7,8-tetrahydrofolate + NADP(+) = (6R)-5,10-methenyltetrahydrofolate + NADPH. It carries out the reaction (6R)-5,10-methenyltetrahydrofolate + H2O = (6R)-10-formyltetrahydrofolate + H(+). The protein operates within one-carbon metabolism; tetrahydrofolate interconversion. Catalyzes the oxidation of 5,10-methylenetetrahydrofolate to 5,10-methenyltetrahydrofolate and then the hydrolysis of 5,10-methenyltetrahydrofolate to 10-formyltetrahydrofolate. This Cenarchaeum symbiosum (strain A) protein is Bifunctional protein FolD.